Reading from the N-terminus, the 189-residue chain is Inner membrane-spanning protein YciB (189 aa).

The next 5 membrane-spanning stretches (helical) occupy residues 23 to 43 (ILLATLVLIPATLAQVAFVWW), 54 to 74 (ITLALVVVMGGATVIFHDAAF), 82 to 102 (VNWLFAFAFLVAPLFGGKTLI), 120 to 140 (LNLAWVAFFIALGAINVYVFK), and 150 to 170 (FKLFGMLGLTLLFVLGQGVYL).

The protein belongs to the YciB family.

It is found in the cell inner membrane. Its function is as follows. Plays a role in cell envelope biogenesis, maintenance of cell envelope integrity and membrane homeostasis. This Chromohalobacter salexigens (strain ATCC BAA-138 / DSM 3043 / CIP 106854 / NCIMB 13768 / 1H11) protein is Inner membrane-spanning protein YciB.